The sequence spans 494 residues: UPF0371 protein str1377 (494 aa).

It belongs to the UPF0371 family.

This Streptococcus thermophilus (strain CNRZ 1066) protein is UPF0371 protein str1377.